Reading from the N-terminus, the 170-residue chain is MDLRKFIRDIPDFPFEGIIFRDVTPLLKNPQAFQAAIDKMAETVSDIDFDLIVAPEARGFIFGSALAYKLHKGFIPVRKPGKLPYETTSIEYDLEYGTAKLQIHSDAIDKGEKILLVDDVLATGGTANAIAQLVKKLGGEVAGTCFLVELTYLNPRERLRDYLIRTVISY.

It belongs to the purine/pyrimidine phosphoribosyltransferase family. In terms of assembly, homodimer.

It is found in the cytoplasm. It carries out the reaction AMP + diphosphate = 5-phospho-alpha-D-ribose 1-diphosphate + adenine. The protein operates within purine metabolism; AMP biosynthesis via salvage pathway; AMP from adenine: step 1/1. In terms of biological role, catalyzes a salvage reaction resulting in the formation of AMP, that is energically less costly than de novo synthesis. The sequence is that of Adenine phosphoribosyltransferase from Pseudothermotoga lettingae (strain ATCC BAA-301 / DSM 14385 / NBRC 107922 / TMO) (Thermotoga lettingae).